The primary structure comprises 345 residues: Flap endonuclease 1 (345 aa).

The tract at residues methionine 1 to arginine 103 is N-domain. Aspartate 34 lines the Mg(2+) pocket. The DNA site is built by arginine 47 and arginine 69. Mg(2+) is bound by residues aspartate 85, glutamate 157, glutamate 159, aspartate 178, and aspartate 180. Residues leucine 121 to histidine 252 form an I-domain region. DNA is bound at residue glutamate 157. DNA-binding residues include glycine 230 and aspartate 232. Aspartate 232 is a Mg(2+) binding site. The segment at threonine 333–isoleucine 341 is interaction with PCNA.

Belongs to the XPG/RAD2 endonuclease family. FEN1 subfamily. As to quaternary structure, interacts with PCNA. Three molecules of FEN1 bind to one PCNA trimer with each molecule binding to one PCNA monomer. PCNA stimulates the nuclease activity without altering cleavage specificity. Requires Mg(2+) as cofactor. Phosphorylated. Phosphorylation upon DNA damage induces relocalization to the nuclear plasma.

It localises to the nucleus. It is found in the nucleolus. The protein resides in the nucleoplasm. The protein localises to the mitochondrion. Functionally, structure-specific nuclease with 5'-flap endonuclease and 5'-3' exonuclease activities involved in DNA replication and repair. During DNA replication, cleaves the 5'-overhanging flap structure that is generated by displacement synthesis when DNA polymerase encounters the 5'-end of a downstream Okazaki fragment. It enters the flap from the 5'-end and then tracks to cleave the flap base, leaving a nick for ligation. Also involved in the long patch base excision repair (LP-BER) pathway, by cleaving within the apurinic/apyrimidinic (AP) site-terminated flap. Acts as a genome stabilization factor that prevents flaps from equilibrating into structures that lead to duplications and deletions. Also possesses 5'-3' exonuclease activity on nicked or gapped double-stranded DNA, and exhibits RNase H activity. Also involved in replication and repair of rDNA and in repairing mitochondrial DNA. This Encephalitozoon cuniculi (strain GB-M1) (Microsporidian parasite) protein is Flap endonuclease 1.